The following is a 91-amino-acid chain: MALNKEDKKDIFLTYSAKNVAQDTGSPESQIALFSNRITYLTEHLKQYPKDKASRLGLIKLVGKRKKQLTYLQNTAIERYRDIIVKLGIRK.

This sequence belongs to the universal ribosomal protein uS15 family. As to quaternary structure, part of the 30S ribosomal subunit. Forms a bridge to the 50S subunit in the 70S ribosome, contacting the 23S rRNA.

One of the primary rRNA binding proteins, it binds directly to 16S rRNA where it helps nucleate assembly of the platform of the 30S subunit by binding and bridging several RNA helices of the 16S rRNA. Its function is as follows. Forms an intersubunit bridge (bridge B4) with the 23S rRNA of the 50S subunit in the ribosome. This is Small ribosomal subunit protein uS15 from Amoebophilus asiaticus (strain 5a2).